Here is a 139-residue protein sequence, read N- to C-terminus: Basic phospholipase A2 beta-bungarotoxin A2 chain (139 aa).

A signal peptide spans 1–9 (AVCVSLLGA). Residues 10 to 17 (ANIPPHPF) constitute a propeptide that is removed on maturation. Positions 45, 47, and 49 each coordinate Ca(2+). Cys-46 and Cys-62 are joined by a disulfide. His-65 is a catalytic residue. Asp-66 serves as a coordination point for Ca(2+).

It belongs to the phospholipase A2 family. Group I subfamily. D49 sub-subfamily. In terms of assembly, heterodimer; disulfide-linked. The A chains have phospholipase A2 activity and the B chains show homology with the basic protease inhibitors. Ca(2+) is required as a cofactor. Expressed by the venom gland.

It localises to the secreted. It catalyses the reaction a 1,2-diacyl-sn-glycero-3-phosphocholine + H2O = a 1-acyl-sn-glycero-3-phosphocholine + a fatty acid + H(+). Snake venom phospholipase A2 (PLA2) that shows presynaptic neurotoxicity. PLA2 catalyzes the calcium-dependent hydrolysis of the 2-acyl groups in 3-sn-phosphoglycerides. The polypeptide is Basic phospholipase A2 beta-bungarotoxin A2 chain (Bungarus candidus (Malayan krait)).